We begin with the raw amino-acid sequence, 68 residues long: uncharacterized protein (68 aa).

One can recognise an HMA domain in the interval 2–67; sequence KTITLNIKGI…VIEDAGFDAT (66 aa). Residues Cys13 and Cys16 each contribute to the a metal cation site.

This is an uncharacterized protein from Haemophilus influenzae (strain ATCC 51907 / DSM 11121 / KW20 / Rd).